A 199-amino-acid chain; its full sequence is Tegument protein UL14 homolog (199 aa).

A compositionally biased stretch (polar residues) spans 176–191 (TDMNQMQPQPISKNEN). The disordered stretch occupies residues 176-199 (TDMNQMQPQPISKNENPPTPHTDV).

Belongs to the alphaherpesvirinae HHV-1 UL14 protein family.

It is found in the virion tegument. It localises to the host cytoplasm. The protein resides in the host nucleus. In terms of biological role, contributes to the nuclear transport of the viral transcriptional activator VP16 homolog during the early phase of infection. Therefore, participates indirectly in the regulation of the immediate-early gene expression. Additionally, seems to be important for efficient nuclear targeting of capsids. The protein is Tegument protein UL14 homolog of Varicella-zoster virus (strain Dumas) (HHV-3).